The following is a 52-amino-acid chain: NADH dehydrogenase [ubiquinone] 1 alpha subcomplex subunit 4 homolog (52 aa).

The chain crosses the membrane as a helical span at residues 14 to 30 (LYPLGAAVATAVGFATY).

This sequence belongs to the complex I NDUFA4 subunit family.

Its subcellular location is the mitochondrion inner membrane. In terms of biological role, accessory subunit of the mitochondrial membrane respiratory chain NADH dehydrogenase (Complex I), that is believed to be not involved in catalysis. Complex I functions in the transfer of electrons from NADH to the respiratory chain. The immediate electron acceptor for the enzyme is believed to be ubiquinone. The protein is NADH dehydrogenase [ubiquinone] 1 alpha subcomplex subunit 4 homolog of Schizosaccharomyces pombe (strain 972 / ATCC 24843) (Fission yeast).